Here is a 672-residue protein sequence, read N- to C-terminus: Glycerophosphocholine phosphodiesterase GPCPD1 (672 aa).

Residues 1-115 enclose the CBM20 domain; it reads MTPSQVAFEI…IIIDDGQFGI (115 aa). Substrate is bound by residues K70 and 88–89; that span reads HK. Residues S175 and S424 each carry the phosphoserine modification. The GP-PDE domain occupies 318-618; that stretch reads PLDVGHRGAG…DRIYDWMPEQ (301 aa). Y608 is modified (phosphotyrosine).

The protein belongs to the glycerophosphoryl diester phosphodiesterase family. As to expression, widely expressed, with highest expression in spinal chord.

The protein localises to the cytoplasm. The protein resides in the cytosol. It catalyses the reaction sn-glycerol 3-phosphocholine + H2O = sn-glycerol 3-phosphate + choline + H(+). In terms of biological role, may be involved in the negative regulation of skeletal muscle differentiation, independently of its glycerophosphocholine phosphodiesterase activity. The chain is Glycerophosphocholine phosphodiesterase GPCPD1 (GPCPD1) from Homo sapiens (Human).